We begin with the raw amino-acid sequence, 267 residues long: Glucosamine-6-phosphate deaminase (267 aa).

Residue D72 is the Proton acceptor; for enolization step of the active site. Catalysis depends on D141, which acts as the For ring-opening step. H143 serves as the catalytic Proton acceptor; for ring-opening step. E148 (for ring-opening step) is an active-site residue.

This sequence belongs to the glucosamine/galactosamine-6-phosphate isomerase family. NagB subfamily.

It catalyses the reaction alpha-D-glucosamine 6-phosphate + H2O = beta-D-fructose 6-phosphate + NH4(+). It participates in amino-sugar metabolism; N-acetylneuraminate degradation; D-fructose 6-phosphate from N-acetylneuraminate: step 5/5. With respect to regulation, allosterically activated by N-acetylglucosamine 6-phosphate (GlcNAc6P). Its function is as follows. Catalyzes the reversible isomerization-deamination of glucosamine 6-phosphate (GlcN6P) to form fructose 6-phosphate (Fru6P) and ammonium ion. The sequence is that of Glucosamine-6-phosphate deaminase from Borrelia hermsii (strain HS1 / DAH).